A 260-amino-acid polypeptide reads, in one-letter code: Vaa serine proteinase homolog 1 (260 aa).

The signal sequence occupies residues 1–18; the sequence is MVLIRVLANLLVLQLSYA. A propeptide spanning residues 19-24 is cleaved from the precursor; it reads QKSSEL. The 227-residue stretch at 25–251 folds into the Peptidase S1 domain; sequence VIGGDECNIN…YTDWIQSIIA (227 aa). Intrachain disulfides connect Cys-31/Cys-165, Cys-52/Cys-68, Cys-100/Cys-258, Cys-144/Cys-212, Cys-176/Cys-191, and Cys-202/Cys-227. A glycan (N-linked (GlcNAc...) asparagine) is linked at Asn-123. The tract at residues 172–186 is key residues for binding to FVIIIa; that stretch reads DYSVCQKVYRKLPEK. N-linked (GlcNAc...) asparagine glycosylation occurs at Asn-253.

The protein belongs to the peptidase S1 family. Snake venom subfamily. Post-translationally, N-glycosylated. The toxin exists in multiple glycoforms. In terms of tissue distribution, expressed by the venom gland.

It localises to the secreted. Functionally, this is the first member of the serine protease family that has strong anticoagulant activity and lacks enzymatic activity. It inhibits activities of three blood coagulation complexes: (1) prothrombinase complex (composed of blood coagulation factors Va and Xa (F5 and F10)) (IC(50)=164.1 nM), (2) intrinsic tenase complex (composed of factors VIIIa and IXa (F8 and F9)), and (3) extrinsic tenase complex (composed of tissue factor and factor VIIa (F7)). The toxin also has been observed to bind prothrombin, factor FVa, non-activated and activated forms of factors FVII (F7) (FVII and FVIIa), factor FVIIIa (F8), factors FIX and FIXa (F9) and factors FX and FXa (F10). The toxin inhibits the activity of the intrinsic tenase complex mainly by competing with FIXa (F9) for binding to FVIIIa (F8). This Vipera ammodytes ammodytes (Western sand viper) protein is Vaa serine proteinase homolog 1.